A 1052-amino-acid chain; its full sequence is Mitotic checkpoint serine/threonine-protein kinase BUB1 beta (1052 aa).

One can recognise a BUB1 N-terminal domain in the interval 56–219 (FESEIRFYSG…LEPSEPQRSS (164 aa)). The Nuclear localization signal signature appears at 105–112 (GETRYYND). Residues 146–179 (AQFYISWAEEYEARENFKKADIIFQEGIERKAEP) are necessary for interaction with KNL1. 2 disordered regions span residues 206 to 256 (EEEA…NAVP) and 272 to 327 (ADTA…TSIP). The short motif at 217–225 (RSSLAELKS) is the D-box element. Lys243 carries the N6-acetyllysine; by PCAF modification. At Ser360 the chain carries Phosphoserine. The interval 361–381 (TRKPGREEGDPLQRVQSHQQG) is disordered. Ser428 is subject to Phosphoserine. Residues 496–552 (SNPREISPAENILQEQPDSKGSSMPFSIFDESLSDKKDKSPATGGPQVLNAQRRPLS) are disordered. Residues 508–520 (LQEQPDSKGSSMP) show a composition bias toward polar residues. Phosphoserine is present on residues Ser535 and Ser659. Ser665 bears the Phosphoserine; by PLK1 mark. The residue at position 686 (Ser686) is a Phosphoserine. The Protein kinase domain maps to 756-1040 (VIKQEHLTCD…TISPEALLTQ (285 aa)). Residue 762–770 (LTCDDYRLF) participates in ATP binding. Residue Thr781 is modified to Phosphothreonine; by PLK1. An ATP-binding site is contributed by Lys784. Catalysis depends on Asp871, which acts as the Proton acceptor. The residue at position 998 (Thr998) is a Phosphothreonine; by PLK1. 2 positions are modified to phosphoserine: Ser1033 and Ser1050.

The protein belongs to the protein kinase superfamily. Ser/Thr protein kinase family. BUB1 subfamily. In terms of assembly, interacts with CENPE. Interacts with PLK1. Part of a complex containing BUB3, CDC20 and BUB1B. Interacts with anaphase-promoting complex/cyclosome (APC/C). Interacts with KNL1. Interacts with KAT2B. Interacts with RIPK3. Interacts with the closed conformation form of MAD2L1. Interacts with CDC20. Post-translationally, proteolytically cleaved by caspase-3 in a cell cycle specific manner. The cleavage might be involved in the durability of the cell cycle delay. Acetylation at Lys-243 regulates its degradation and timing in anaphase entry. In terms of processing, ubiquitinated. Degraded by the proteasome. Ubiquitinated by UBR5, promoting disassembly of the mitotic checkpoint complex from the APC/C complex. Post-translationally, sumoylated with SUMO2 and SUMO3. The sumoylation mediates the association with CENPE at the kinetochore. Autophosphorylated in vitro. Intramolecular autophosphorylation stimulated by CENPE. Phosphorylated during mitosis and hyperphosphorylated in mitotically arrested cells. Phosphorylation at Ser-659 and Ser-1033 occurs at kinetochores upon mitotic entry with dephosphorylation at the onset of anaphase. In terms of processing, proteolytically cleaved by caspase-3 in a cell cycle specific manner. The cleavage might be involved in the durability of the cell cycle delay. Caspase-3 cleavage is associated with abrogation of the mitotic checkpoint. The major site of cleavage is at Asp-603. Highly expressed in thymus followed by spleen.

It localises to the cytoplasm. The protein localises to the nucleus. It is found in the chromosome. The protein resides in the centromere. Its subcellular location is the kinetochore. It carries out the reaction L-seryl-[protein] + ATP = O-phospho-L-seryl-[protein] + ADP + H(+). The enzyme catalyses L-threonyl-[protein] + ATP = O-phospho-L-threonyl-[protein] + ADP + H(+). With respect to regulation, kinase activity stimulated by CENPE. Essential component of the mitotic checkpoint. Required for normal mitosis progression and tumor suppression. The mitotic checkpoint delays anaphase until all chromosomes are properly attached to the mitotic spindle. One of its checkpoint functions is to inhibit the activity of the anaphase-promoting complex/cyclosome (APC/C) by blocking the binding of CDC20 to APC/C, independently of its kinase activity. The other is to monitor kinetochore activities that depend on the kinetochore motor CENPE. Required for kinetochore localization of CENPE. Negatively regulates PLK1 activity in interphase cells and suppresses centrosome amplification. Also implicated in triggering apoptosis in polyploid cells that exit aberrantly from mitotic arrest. Essential for tumor suppression. May play a role in regulating aging and fertility. This is Mitotic checkpoint serine/threonine-protein kinase BUB1 beta (Bub1b) from Mus musculus (Mouse).